The sequence spans 769 residues: Serine/threonine-protein kinase PLK4 (769 aa).

The 254-residue stretch at 14–267 (YEVQHLLGKG…LEAVLCHPFM (254 aa)) folds into the Protein kinase domain. ATP contacts are provided by residues 20–28 (LGKGGFATV) and Lys43. The active-site Proton acceptor is the Asp138. One can recognise a Cryptic POLO box 1 (CPB1) domain in the interval 381–498 (EDRISVPPLN…ARFVGLVKSK (118 aa)). Residues 499–602 (TPKVTYFSTL…GRRPITDVQP (104 aa)) form the Cryptic POLO box 2 (CPB2) domain. Residues 660 to 739 (PIKRINVPDI…IPNIQLKLKT (80 aa)) form the POLO box domain.

This sequence belongs to the protein kinase superfamily. Ser/Thr protein kinase family. CDC5/Polo subfamily. As to quaternary structure, homodimer. Ubiquitinated by the SCF(Slimb) ubiquitin ligase complex; leading to its degradation by the proteasome during interphase and regulating centriole number and ensuring the block to centriole reduplication.

Its subcellular location is the cytoplasm. It localises to the cytoskeleton. It is found in the microtubule organizing center. The protein localises to the centrosome. The protein resides in the centriole. It catalyses the reaction L-seryl-[protein] + ATP = O-phospho-L-seryl-[protein] + ADP + H(+). The catalysed reaction is L-threonyl-[protein] + ATP = O-phospho-L-threonyl-[protein] + ADP + H(+). Serine/threonine-protein kinase that plays a central role in centriole duplication. Able to trigger procentriole formation on the surface of the mother centriole cylinder, using mother centriole as a platform, leading to the recruitment of centriole biogenesis proteins such as sas-6. When overexpressed, it is able to induce centrosome amplification through the simultaneous generation of multiple procentrioles adjoining each parental centriole during S phase. Centrosome amplification following overexpression can initiate tumorigenesis, highlighting the importance of centrosome regulation in cancers. In Drosophila simulans (Fruit fly), this protein is Serine/threonine-protein kinase PLK4 (SAK).